Consider the following 352-residue polypeptide: Aspartic protease Bla g 2 (352 aa).

Positions methionine 1–alanine 19 are cleaved as a signal peptide. The propeptide at alanine 20–arginine 24 is removed in mature form. The region spanning tyrosine 39–glycine 346 is the Peptidase A1 domain. Aspartate 55 is an active-site residue. Disulfide bonds link cysteine 59–cysteine 151, cysteine 68–cysteine 73, and cysteine 75–cysteine 136. Asparagine 117 is a glycosylation site (N-linked (GlcNAc...) asparagine). Zn(2+)-binding residues include histidine 178 and histidine 186. Residue aspartate 239 is part of the active site. 2 cysteine pairs are disulfide-bonded: cysteine 261/cysteine 272 and cysteine 276/cysteine 309. N-linked (GlcNAc...) asparagine glycosylation is present at asparagine 295. Zn(2+) is bound by residues aspartate 326 and aspartate 330. An N-linked (GlcNAc...) asparagine glycan is attached at asparagine 340.

It belongs to the peptidase A1 family. In terms of assembly, homodimer.

Functions as a digestive enzyme in the cockroach. This is Aspartic protease Bla g 2 from Blattella germanica (German cockroach).